The chain runs to 437 residues: Acyl-coenzyme A thioesterase 9, mitochondrial (437 aa).

The transit peptide at 1–21 (MRRAALRLCTLSKGLLAPSRG) directs the protein to the mitochondrion. HotDog ACOT-type domains follow at residues 84–207 (SYIE…RDSE) and 287–399 (ENSK…EKEV). At K101 the chain carries N6-acetyllysine.

The protein belongs to the acyl coenzyme A hydrolase family. In terms of assembly, interacts with NYAP1, NYAP2 and MYO16.

It is found in the mitochondrion. The protein localises to the mitochondrion matrix. It localises to the mitochondrion inner membrane. It carries out the reaction butanoyl-CoA + H2O = butanoate + CoA + H(+). It catalyses the reaction propanoyl-CoA + H2O = propanoate + CoA + H(+). The enzyme catalyses hexadecanoyl-CoA + H2O = hexadecanoate + CoA + H(+). The catalysed reaction is octanoyl-CoA + H2O = octanoate + CoA + H(+). It carries out the reaction decanoyl-CoA + H2O = decanoate + CoA + H(+). It catalyses the reaction tetradecanoyl-CoA + H2O = tetradecanoate + CoA + H(+). The enzyme catalyses 4,8-dimethylnonanoyl-CoA + H2O = 4,8-dimethylnonanoate + CoA + H(+). The catalysed reaction is 3-methylbutanoyl-CoA + H2O = 3-methylbutanoate + CoA + H(+). It carries out the reaction 2-methylpropanoyl-CoA + H2O = 2-methylpropanoate + CoA + H(+). It functions in the pathway lipid metabolism; fatty acid metabolism. Its activity is regulated as follows. Strongly inhibited by NADH and CoA. In terms of biological role, mitochondrial acyl-CoA thioesterase. Catalyzes the hydrolysis of acyl-CoAs into free fatty acids and coenzyme A (CoA), regulating their respective intracellular levels. Regulates both mitochondrial lipid and amino acid metabolism. The protein is Acyl-coenzyme A thioesterase 9, mitochondrial (ACOT9) of Bos taurus (Bovine).